The following is a 338-amino-acid chain: RNA 3'-terminal phosphate cyclase (338 aa).

Residues Gln-103 and 283–287 (YLADQ) contribute to the ATP site. His-308 functions as the Tele-AMP-histidine intermediate in the catalytic mechanism.

Belongs to the RNA 3'-terminal cyclase family. Type 1 subfamily.

It is found in the cytoplasm. It catalyses the reaction a 3'-end 3'-phospho-ribonucleotide-RNA + ATP = a 3'-end 2',3'-cyclophospho-ribonucleotide-RNA + AMP + diphosphate. Catalyzes the conversion of 3'-phosphate to a 2',3'-cyclic phosphodiester at the end of RNA. The mechanism of action of the enzyme occurs in 3 steps: (A) adenylation of the enzyme by ATP; (B) transfer of adenylate to an RNA-N3'P to produce RNA-N3'PP5'A; (C) and attack of the adjacent 2'-hydroxyl on the 3'-phosphorus in the diester linkage to produce the cyclic end product. The biological role of this enzyme is unknown but it is likely to function in some aspects of cellular RNA processing. In Shigella sonnei (strain Ss046), this protein is RNA 3'-terminal phosphate cyclase.